The following is a 228-amino-acid chain: uncharacterized protein (228 aa).

Residues 1–23 (MIRHTRLLLASLCLIATGARASA) form the signal peptide.

This is an uncharacterized protein from Methylorubrum extorquens (strain ATCC 14718 / DSM 1338 / JCM 2805 / NCIMB 9133 / AM1) (Methylobacterium extorquens).